Consider the following 153-residue polypeptide: ORM1-like protein 2 (153 aa).

The Cytoplasmic portion of the chain corresponds to 1 to 21 (MNVGVAHSEVNPNTRVMNSRG). The next 2 helical transmembrane spans lie at 22 to 42 (IWLA…SIPF) and 43 to 63 (FSIP…MYVF). Residues 64–105 (LHTVKGTPFETPDQGKARLLTHWEQMDYGLQFTSSRKFLSIS) lie on the Cytoplasmic side of the membrane. Residues 106 to 126 (PIVLYLLASFYTKYDAAHFLI) form a helical membrane-spanning segment. Residues 127 to 153 (NTASLLSVLLPKLPQFHGVRLFGINKY) are Extracellular-facing.

This sequence belongs to the ORM family. As to quaternary structure, ceramide-sensitive subunit of the serine palmitoyltransferase (SPT) complex, which is also composed of SPTLC1, SPTLC2/3 and SPTSSA/B.

It is found in the endoplasmic reticulum membrane. Functionally, plays an essential role in the homeostatic regulation of sphingolipid de novo biosynthesis by modulating the activity of the serine palmitoyltransferase (SPT) in response to ceramide levels. When complexed to SPT, the binding of ceramides to its N-terminus stabilizes a conformation that block SPT substrate entry, hence preventing SPT catalytic activity. Through this mechanism, maintains ceramide levels at sufficient concentrations for the production of complex sphingolipids, but which prevents the accumulation of ceramides to levels that trigger apoptosis. This Bos taurus (Bovine) protein is ORM1-like protein 2 (ORMDL2).